The primary structure comprises 539 residues: MSKYVDLTGKPFHFIGIGGIGMSALAYILAKRKLPTYGSDIKSSHITRRLEAIGAHIFWHQEAKNLELFQQTTEEQNLFLSNNSSLNLSQFTPCISLGEVTTKKHNVKLENHKGISQLPQVVCSTAINTTNSEYKAAVELGCPIFHRSDLLAALIQDYQSIAVAGTHGKTTTSSLIGFMLLEAGLDPTIVIGGEVDAWGGNARLGRSPYLVAEADESDGSLVKLSAHIGVVTNIELDHPDHYDSLDQVVEIFQVFKENCQNLVGCIDCSTVREKLQPTISYSINFESDAHYKVDCVHYQSNVTLARVWEKGQILGQLKLRLLGKHNLSNALAAVAVGRLLGLEFSTITSAIALFEGAHRRFEYRGECNGIVFVDDYAHHPSEINATLAAANLQKNQELSPKPHISTKKLTLKTQNNSLKIERVVAIFQPHRYSRTQAFISEFAQSFNDADMVIVTNIYSAGESSEGQINSQQVAEAISRYHRQVYYRSSLDSVSKFLYQVLKPGDLAIFLSAGNLNQIIPELMARYQQPHYQVKSCEIA.

165 to 171 (GTHGKTT) serves as a coordination point for ATP.

The protein belongs to the MurCDEF family.

The protein localises to the cytoplasm. It catalyses the reaction UDP-N-acetyl-alpha-D-muramate + L-alanine + ATP = UDP-N-acetyl-alpha-D-muramoyl-L-alanine + ADP + phosphate + H(+). The protein operates within cell wall biogenesis; peptidoglycan biosynthesis. Functionally, cell wall formation. This chain is UDP-N-acetylmuramate--L-alanine ligase, found in Trichodesmium erythraeum (strain IMS101).